The chain runs to 474 residues: MAGRLRGPAVPGGGESSDSDEDGWDIGYTERPDKLKDSLLSEEKDEVLKRALTTGDGSLLEELLNSGMQVDSSFRFGWTPLMYAASIANVDLVRILLDRGANASFSKDQHTVLMAACSARVPEERILKTAELLLSRNASPNATCRKRMSPLMYAAREGHSQLVALLVGHGAEINAQDDNGYTALAWAARHGHKTTVLKLLELGADKTLQTQDGKTPAEIAKRNKHPELFSMLSLTLNPLHGKFQNITKEENICKFLITDSEKSRDHGFSSYSAFGDLEIFLHGLQLEHLTELLKERDITLRQLLTLRKDDFTKIGITNVRDQKKIMDAVEELQVEEIKFEELPEVMKLEFSGDEFLNFLLKLSKQCGHLTTAVQDIISQFPVHSHKIVLEWGSPECFTSVCEDLVHNAQNLGEEVGKLKHLIQKLHNDQKNDSCRIPPMENVSTGKKRLWKRAAVTVCGFGLLFIVCKLTFLRK.

Positions 1 to 31 (MAGRLRGPAVPGGGESSDSDEDGWDIGYTER) are disordered. A phosphoserine mark is found at serine 16, serine 17, and serine 19. 6 ANK repeats span residues 43–72 (EKDE…QVDS), 76–105 (FGWT…NASF), 108–142 (DQHT…SPNA), 146–175 (KRMS…EINA), 179–208 (NGYT…DKTL), and 212–241 (DGKT…PLHG). Residues 270–333 (SYSAFGDLEI…KIMDAVEELQ (64 aa)) form the SAM domain.

In terms of assembly, interacts with DDX4, PIWIL1, RANBP9 and TDRD1.

The protein resides in the cytoplasm. Plays a central role during spermatogenesis by repressing transposable elements and preventing their mobilization, which is essential for the germline integrity. Acts via the piRNA metabolic process, which mediates the repression of transposable elements during meiosis by forming complexes composed of piRNAs and Piwi proteins and governs the methylation and subsequent repression of transposons. Its association with pi-bodies suggests a participation in the primary piRNAs metabolic process. Required prior to the pachytene stage to facilitate the production of multiple types of piRNAs, including those associated with repeats involved in the regulation of retrotransposons. May act by mediating protein-protein interactions during germ cell maturation. The protein is Ankyrin repeat, SAM and basic leucine zipper domain-containing protein 1 (ASZ1) of Ornithorhynchus anatinus (Duckbill platypus).